Consider the following 217-residue polypeptide: Adenylate kinase (217 aa).

10-15 (GAGKGT) lines the ATP pocket. The tract at residues 30–59 (STGDMLRAAIREGTELGLKAKSVMESGGLV) is NMP. Residues Thr-31, Arg-36, 57–59 (GLV), 85–88 (GFPR), and Gln-92 each bind AMP. Positions 122 to 159 (GRRQHPASGRVYHVVYNPPKVEGKDDETGEDLVQRPDD) are LID. Residues Arg-123 and 132 to 133 (VY) each bind ATP. AMP is bound by residues Arg-156 and Arg-167. ATP is bound at residue Arg-202.

It belongs to the adenylate kinase family. As to quaternary structure, monomer.

It is found in the cytoplasm. The enzyme catalyses AMP + ATP = 2 ADP. It functions in the pathway purine metabolism; AMP biosynthesis via salvage pathway; AMP from ADP: step 1/1. In terms of biological role, catalyzes the reversible transfer of the terminal phosphate group between ATP and AMP. Plays an important role in cellular energy homeostasis and in adenine nucleotide metabolism. This is Adenylate kinase from Acinetobacter baumannii (strain AB307-0294).